Consider the following 371-residue polypeptide: Methionine import ATP-binding protein MetN (371 aa).

The tract at residues 1 to 22 is disordered; sequence MSEPFMNAPWQPPGDHPALKSP. The region spanning 27 to 268 is the ABC transporter domain; sequence ILIDSVRKLY…PRHEVTRRFV (242 aa). Position 65 to 72 (65 to 72) interacts with ATP; it reads GRSGAGKS.

This sequence belongs to the ABC transporter superfamily. Methionine importer (TC 3.A.1.24) family. In terms of assembly, the complex is composed of two ATP-binding proteins (MetN), two transmembrane proteins (MetI) and a solute-binding protein (MetQ).

It localises to the cell inner membrane. The enzyme catalyses L-methionine(out) + ATP + H2O = L-methionine(in) + ADP + phosphate + H(+). The catalysed reaction is D-methionine(out) + ATP + H2O = D-methionine(in) + ADP + phosphate + H(+). In terms of biological role, part of the ABC transporter complex MetNIQ involved in methionine import. Responsible for energy coupling to the transport system. In Rhodopseudomonas palustris (strain BisB5), this protein is Methionine import ATP-binding protein MetN.